The primary structure comprises 262 residues: MEVKAMEIFKKYLSLNIPKKILITYFLCWAGFLFSFSVGKFLLYLSSILKSNFISEPAKLAQSVGTAKFNAVSSAVSNTVGVKNAYLTYALSYIVSNFMGCLIIMFALGALAYLYKKDLEKAKTLEEKEELFKCYQKYLLILFIFTVINPLTGLIGVNLQYSDLIAVLPHGFFEFFGFATAVVVGVELSNKILPIVKREITSKKIVILIACSFIFIFIAGMLEPIDWFIYSYAKAYGIPLLAAFATGYKNLFLYLISMLFKS.

6 helical membrane passes run 21-41 (ILITYFLCWAGFLFSFSVGKF), 94-114 (IVSNFMGCLIIMFALGALAYL), 139-159 (LLILFIFTVINPLTGLIGVNL), 164-184 (LIAVLPHGFFEFFGFATAVVV), 205-225 (IVILIACSFIFIFIAGMLEPI), and 240-260 (LLAAFATGYKNLFLYLISMLF).

It is found in the cell membrane. This is an uncharacterized protein from Methanocaldococcus jannaschii (strain ATCC 43067 / DSM 2661 / JAL-1 / JCM 10045 / NBRC 100440) (Methanococcus jannaschii).